The sequence spans 333 residues: 4-hydroxy-3-methylbut-2-enyl diphosphate reductase (333 aa).

Cys-34 contributes to the [4Fe-4S] cluster binding site. (2E)-4-hydroxy-3-methylbut-2-enyl diphosphate-binding residues include His-63 and His-96. Dimethylallyl diphosphate-binding residues include His-63 and His-96. Isopentenyl diphosphate contacts are provided by His-63 and His-96. Position 118 (Cys-118) interacts with [4Fe-4S] cluster. (2E)-4-hydroxy-3-methylbut-2-enyl diphosphate is bound at residue His-146. Residue His-146 participates in dimethylallyl diphosphate binding. His-146 provides a ligand contact to isopentenyl diphosphate. The active-site Proton donor is the Glu-148. Thr-186 contributes to the (2E)-4-hydroxy-3-methylbut-2-enyl diphosphate binding site. Cys-216 contributes to the [4Fe-4S] cluster binding site. (2E)-4-hydroxy-3-methylbut-2-enyl diphosphate contacts are provided by Ser-244, Ser-245, Asn-246, and Ser-289. Dimethylallyl diphosphate is bound by residues Ser-244, Ser-245, Asn-246, and Ser-289. Ser-244, Ser-245, Asn-246, and Ser-289 together coordinate isopentenyl diphosphate.

This sequence belongs to the IspH family. The cofactor is [4Fe-4S] cluster.

The enzyme catalyses isopentenyl diphosphate + 2 oxidized [2Fe-2S]-[ferredoxin] + H2O = (2E)-4-hydroxy-3-methylbut-2-enyl diphosphate + 2 reduced [2Fe-2S]-[ferredoxin] + 2 H(+). The catalysed reaction is dimethylallyl diphosphate + 2 oxidized [2Fe-2S]-[ferredoxin] + H2O = (2E)-4-hydroxy-3-methylbut-2-enyl diphosphate + 2 reduced [2Fe-2S]-[ferredoxin] + 2 H(+). The protein operates within isoprenoid biosynthesis; dimethylallyl diphosphate biosynthesis; dimethylallyl diphosphate from (2E)-4-hydroxy-3-methylbutenyl diphosphate: step 1/1. It functions in the pathway isoprenoid biosynthesis; isopentenyl diphosphate biosynthesis via DXP pathway; isopentenyl diphosphate from 1-deoxy-D-xylulose 5-phosphate: step 6/6. Its function is as follows. Catalyzes the conversion of 1-hydroxy-2-methyl-2-(E)-butenyl 4-diphosphate (HMBPP) into a mixture of isopentenyl diphosphate (IPP) and dimethylallyl diphosphate (DMAPP). Acts in the terminal step of the DOXP/MEP pathway for isoprenoid precursor biosynthesis. This is 4-hydroxy-3-methylbut-2-enyl diphosphate reductase from Mycolicibacterium gilvum (strain PYR-GCK) (Mycobacterium gilvum (strain PYR-GCK)).